Consider the following 247-residue polypeptide: Pulmonary surfactant-associated protein A (247 aa).

The N-terminal stretch at 1 to 19 is a signal peptide; sequence MWCSLALILILVTVSGIMC. An N-linked (GlcNAc...) asparagine glycan is attached at asparagine 20. The Collagen-like domain occupies 27-99; it reads GSPGIPGTPG…PGERGPPGLP (73 aa). 4-hydroxyproline occurs at positions 29, 32, 35, 41, 53, 56, 62, 66, and 69. The interval 32-101 is disordered; the sequence is PGTPGSHGLP…ERGPPGLPAS (70 aa). The span at 41 to 50 shows a compositional bias: basic and acidic residues; it reads PGRDGRDGVK. Positions 53 to 64 are enriched in pro residues; sequence PGPPGPMGPPGV. Residues 83–92 show a composition bias toward basic and acidic residues; sequence ERGDKGDPGE. Residues 131 to 247 form the C-type lectin domain; that stretch reads LAVGDKVFAT…LQSRLTICEF (117 aa). 2 cysteine pairs are disulfide-bonded: cysteine 154–cysteine 245 and cysteine 223–cysteine 237. Asparagine 206 carries N-linked (GlcNAc...) asparagine glycosylation. 4 residues coordinate Ca(2+): glutamate 214, arginine 216, asparagine 233, and aspartate 234.

Belongs to the SFTPA family. Oligomeric complex of 6 set of homotrimers.

The protein localises to the secreted. It localises to the extracellular space. It is found in the extracellular matrix. The protein resides in the surface film. Its function is as follows. In presence of calcium ions, it binds to surfactant phospholipids and contributes to lower the surface tension at the air-liquid interface in the alveoli of the mammalian lung and is essential for normal respiration. Enhances the expression of MYO18A/SP-R210 on alveolar macrophages. The chain is Pulmonary surfactant-associated protein A (SFTPA1) from Cavia porcellus (Guinea pig).